Here is a 484-residue protein sequence, read N- to C-terminus: MKVLMVASEVAPFARTGGLAEVTAALPAALRRMGHDVRVIMPFYRCAAQTELGVRKARKSAEVSLNGETHKGFLRQAALGDVPVYLVENREFFSRDYLYGTPEGDYPDNPRRFAFFCRSVLQFLKRMDFRPDVIHCHDWQTALIPIILRLEAADDPFFARTATVFTIHNLAYQGLFPAPAIAETGLPSALFTTEWLEYYGQLNLMKGAILTADLITTVSETYRREIMTPTQGCGLEGVLARRGDDLFGIVNGIDTDEWNPAADKRIFRNYSARALAGKAADKLELQRELGMPAAPSVPLIGMVSRLAEQKGIDLVLELLPRLAESELQFVLLGTGNACYLERLNSFRSKGAANISINLGFNDPLAPKIYAGSDLFLMPSRFEPCGLSQLIAMRYGTVPVVRHTGGLRDTVVDVTRHPREGTGFTFEDFTADACWEAIERALAGYRDRESWRRIMRRGMHRDVSWHNAAGRYETLYRMAADTRRG.

Arginine 15 serves as a coordination point for ADP-alpha-D-glucose.

It belongs to the glycosyltransferase 1 family. Bacterial/plant glycogen synthase subfamily.

The catalysed reaction is [(1-&gt;4)-alpha-D-glucosyl](n) + ADP-alpha-D-glucose = [(1-&gt;4)-alpha-D-glucosyl](n+1) + ADP + H(+). The protein operates within glycan biosynthesis; glycogen biosynthesis. Functionally, synthesizes alpha-1,4-glucan chains using ADP-glucose. This Geobacter sulfurreducens (strain ATCC 51573 / DSM 12127 / PCA) protein is Glycogen synthase 2.